Consider the following 633-residue polypeptide: Glutamyl-tRNA(Gln) amidotransferase subunit E (633 aa).

A disordered region spans residues 415–437 (LDDGTTKFLRPQPGSARMYPETD).

The protein belongs to the GatB/GatE family. GatE subfamily. In terms of assembly, heterodimer of GatD and GatE.

It catalyses the reaction L-glutamyl-tRNA(Gln) + L-glutamine + ATP + H2O = L-glutaminyl-tRNA(Gln) + L-glutamate + ADP + phosphate + H(+). In terms of biological role, allows the formation of correctly charged Gln-tRNA(Gln) through the transamidation of misacylated Glu-tRNA(Gln) in organisms which lack glutaminyl-tRNA synthetase. The reaction takes place in the presence of glutamine and ATP through an activated gamma-phospho-Glu-tRNA(Gln). The GatDE system is specific for glutamate and does not act on aspartate. In Saccharolobus solfataricus (strain ATCC 35092 / DSM 1617 / JCM 11322 / P2) (Sulfolobus solfataricus), this protein is Glutamyl-tRNA(Gln) amidotransferase subunit E.